Here is a 212-residue protein sequence, read N- to C-terminus: MGVTCVSQMPVAEGKSLQQTVELLTKKLEMLGAEKQGTFCVDCETYHTAASTLGSQGQAGKLMYVMHNSEYPLSCFALFENGPCLIADTNFDVLMVKLKGFFQSAKASKIETRGTRYQYCDFLVKVGTVTMGPSARGISVEVEYGPCVVASDCWSLLLEFLQSFLGSHAPGAPTVFGNRHDAVYGPADTMIQYMELFNKIRKQQQVPVAGIR.

Belongs to the Mediator complex subunit 20 family. In terms of assembly, component of the Mediator complex, which is composed of MED1, MED4, MED6, MED7, MED8, MED9, MED10, MED11, MED12, MED13, MED13L, MED14, MED15, MED16, MED17, MED18, MED19, MED20, MED21, MED22, MED23, MED24, MED25, MED26, MED27, MED29, MED30, MED31, CCNC, CDK8 and CDC2L6/CDK11. The MED12, MED13, CCNC and CDK8 subunits form a distinct module termed the CDK8 module. Mediator containing the CDK8 module is less active than Mediator lacking this module in supporting transcriptional activation. Individual preparations of the Mediator complex lacking one or more distinct subunits have been variously termed ARC, CRSP, DRIP, PC2, SMCC and TRAP. Interacts with PPARG.

It localises to the nucleus. In terms of biological role, component of the Mediator complex, a coactivator involved in the regulated transcription of nearly all RNA polymerase II-dependent genes. Mediator functions as a bridge to convey information from gene-specific regulatory proteins to the basal RNA polymerase II transcription machinery. Mediator is recruited to promoters by direct interactions with regulatory proteins and serves as a scaffold for the assembly of a functional preinitiation complex with RNA polymerase II and the general transcription factors. This chain is Mediator of RNA polymerase II transcription subunit 20 (Med20), found in Mus musculus (Mouse).